Reading from the N-terminus, the 931-residue chain is Synaptopodin (931 aa).

Disordered stretches follow at residues glutamate 56–isoleucine 78 and alanine 113–tyrosine 243. Residue serine 134 is modified to Phosphoserine. Positions threonine 136 to glutamine 148 are enriched in basic and acidic residues. 2 stretches are compositionally biased toward polar residues: residues glutamine 153–glycine 164 and proline 188–proline 200. Serine 202, serine 222, and serine 258 each carry phosphoserine. The segment covering proline 214 to serine 232 has biased composition (low complexity). Residues glycine 280–leucine 420 form a disordered region. Composition is skewed to polar residues over residues histidine 282–serine 293 and isoleucine 309–serine 370. Positions aspartate 373 to arginine 384 are enriched in basic and acidic residues. Serine 490 and serine 514 each carry phosphoserine. Disordered regions lie at residues arginine 542–valine 591 and serine 691–glycine 711. Threonine 549 carries the phosphothreonine modification. The short motif at proline 551–tyrosine 554 is the PPxY motif element. Residues glutamate 556–arginine 568 show a composition bias toward polar residues. Serine 569 carries the post-translational modification Phosphoserine. The span at serine 569 to serine 580 shows a compositional bias: low complexity. The PPxY motif motif lies at proline 570 to tyrosine 573. Residues serine 691, serine 742, serine 746, and serine 767 each carry the phosphoserine modification. Phosphothreonine is present on threonine 771. The interval serine 775 to glycine 918 is disordered. The segment covering serine 816–serine 841 has biased composition (low complexity). Serine 835 bears the Phosphoserine mark. Residue arginine 850 is modified to Omega-N-methylarginine. Position 856 is a phosphoserine (serine 856). Over residues valine 874–serine 895 the composition is skewed to polar residues.

Belongs to the synaptopodin family. Interacts with BAIAP1. Interacts with actin. Interacts (via PPxY motifs) with WWC1 (via WW domains). Post-translationally, O-glycosylated. As to expression, expressed at high levels in brain and at moderate, but still significant levels in the heart, skeletal muscle, lung and kidney. In brain, expressed in the cerebral cortex, hippocampus, olfactory bulb and striatum.

The protein resides in the cytoplasm. Its subcellular location is the cytoskeleton. The protein localises to the cell junction. It is found in the tight junction. It localises to the perikaryon. The protein resides in the cell projection. Its subcellular location is the dendritic spine. The protein localises to the postsynaptic density. It is found in the synapse. It localises to the cytosol. Actin-associated protein that may play a role in modulating actin-based shape and motility of dendritic spines and renal podocyte foot processes. Seems to be essential for the formation of spine apparatuses in spines of telencephalic neurons, which is involved in synaptic plasticity. This chain is Synaptopodin (Synpo), found in Rattus norvegicus (Rat).